The primary structure comprises 283 residues: Phospholipid phosphatase 1 (283 aa).

At 1-6 (MFDKTR) the chain is on the cytoplasmic side. A PDZ-binding; involved in localization to the apical cell membrane motif is present at residues 5-7 (TRL). A helical transmembrane segment spans residues 7-27 (LPYVALDVICVLLAGLPFAIL). Over 28–53 (TSRHTPFQRGIFCNDDSIKYPYKEDT) the chain is Extracellular. A helical transmembrane segment spans residues 54-74 (IPYALLGGIVIPFCIIVMSIG). The Cytoplasmic segment spans residues 75 to 88 (ESLSVYFNVLHSNS). Residues 89–109 (FVGNPYIATIYKAVGAFLFGV) traverse the membrane as a helical segment. Topologically, residues 110–164 (SASQSLTDIAKYTIGSLRPHFLAICNPDWSKINCSDGYIEDYICQGNEEKVKEGR) are extracellular. The interval 120-128 (KYTIGSLRP) is phosphatase sequence motif I. N-linked (GlcNAc...) asparagine glycosylation is present at Asn-142. A helical transmembrane segment spans residues 165-185 (LSFYSGHSSFSMYCMLFVALY). Positions 168–171 (YSGH) are phosphatase sequence motif II. The Proton donors role is filled by His-171. Residues 186–199 (LQARMKGDWARLLR) lie on the Cytoplasmic side of the membrane. The chain crosses the membrane as a helical span at residues 200-220 (PMLQFGLIAFSIYVGLSRVSD). A phosphatase sequence motif III region spans residues 216–227 (SRVSDYKHHWSD). The Extracellular segment spans residues 221–229 (YKHHWSDVT). The active-site Nucleophile is His-223. Residues 230 to 250 (VGLIQGAAMAILVALYVSDFF) traverse the membrane as a helical segment. Topologically, residues 251–283 (KDTHSYKERKEEDPHTTLHETASSRNYSTNHEP) are cytoplasmic. Residues 260-283 (KEEDPHTTLHETASSRNYSTNHEP) form a disordered region. Polar residues predominate over residues 269-283 (HETASSRNYSTNHEP).

Belongs to the PA-phosphatase related phosphoesterase family. Forms functional homodimers and homooligomers that are not required for substrate recognition and catalytic activity. Can also form heterooligomers with PLPP2 and PLPP3. Post-translationally, N-glycosylated. N-linked sugars are of the complex type. N-glycosylation is not required for the phosphatase activity. Widely expressed. Highly expressed in kidney and lung. Almost undetectable in brain, heart, bone, muscle or spleen.

The protein resides in the cell membrane. It is found in the apical cell membrane. It localises to the membrane raft. Its subcellular location is the membrane. The protein localises to the caveola. It carries out the reaction a 1,2-diacyl-sn-glycero-3-phosphate + H2O = a 1,2-diacyl-sn-glycerol + phosphate. The enzyme catalyses 1,2-dihexadecanoyl-sn-glycero-3-phosphate + H2O = 1,2-dihexadecanoyl-sn-glycerol + phosphate. It catalyses the reaction 1,2-di-(9Z-octadecenoyl)-sn-glycero-3-phosphate + H2O = 1,2-di-(9Z-octadecenoyl)-sn-glycerol + phosphate. The catalysed reaction is a monoacyl-sn-glycero-3-phosphate + H2O = a monoacylglycerol + phosphate. It carries out the reaction (9Z)-octadecenoyl-sn-glycero-3-phosphate + H2O = (9Z-octadecenoyl)-glycerol + phosphate. The enzyme catalyses a 1-acyl-sn-glycero-3-phosphate + H2O = a 1-acyl-sn-glycerol + phosphate. It catalyses the reaction 1-(9Z-octadecenoyl)-sn-glycero-3-phosphate + H2O = 1-(9Z-octadecenoyl)-sn-glycerol + phosphate. The catalysed reaction is a 1,2-diacyl-sn-glycerol 3-diphosphate + H2O = a 1,2-diacyl-sn-glycero-3-phosphate + phosphate + H(+). It carries out the reaction sphing-4-enine 1-phosphate + H2O = sphing-4-enine + phosphate. The enzyme catalyses an N-acylsphing-4-enine 1-phosphate + H2O = an N-acylsphing-4-enine + phosphate. It catalyses the reaction N-(octanoyl)-sphing-4-enine-1-phosphate + H2O = N-octanoylsphing-4-enine + phosphate. The catalysed reaction is N-(9Z-octadecenoyl)-ethanolamine phosphate + H2O = N-(9Z-octadecenoyl) ethanolamine + phosphate. It carries out the reaction 1-hexadecanoyl-2-(9Z-octadecenoyl)-sn-glycero-3-phosphate + H2O = 1-hexadecanoyl-2-(9Z-octadecenoyl)-sn-glycerol + phosphate. The protein operates within lipid metabolism; phospholipid metabolism. Magnesium-independent phospholipid phosphatase. Insensitive to N-ethylmaleimide. In terms of biological role, magnesium-independent phospholipid phosphatase of the plasma membrane that catalyzes the dephosphorylation of a variety of glycerolipid and sphingolipid phosphate esters including phosphatidate/PA, lysophosphatidate/LPA, diacylglycerol pyrophosphate/DGPP, sphingosine 1-phosphate/S1P and ceramide 1-phosphate/C1P. Also acts on N-oleoyl ethanolamine phosphate/N-(9Z-octadecenoyl)-ethanolamine phosphate, a potential physiological compound. Through its extracellular phosphatase activity allows both the hydrolysis and the cellular uptake of these bioactive lipid mediators from the milieu, regulating signal transduction in different cellular processes. It is for instance essential for the extracellular hydrolysis of S1P and subsequent conversion into intracellular S1P. Involved in the regulation of inflammation, platelets activation, cell proliferation and migration among other processes. May also have an intracellular activity to regulate phospholipid-mediated signaling pathways. The polypeptide is Phospholipid phosphatase 1 (Mus musculus (Mouse)).